A 398-amino-acid polypeptide reads, in one-letter code: Probable peptidoglycan glycosyltransferase FtsW (398 aa).

Residues 1 to 20 (MSTQAIRGARGLVLKWGAGR) are Cytoplasmic-facing. The helical transmembrane segment at 21 to 41 (FYLDTVLLSVSLGLMLFGFVM) threads the bilayer. The Periplasmic segment spans residues 42–57 (VSSASLHLGEKMASDS). Residues 58 to 78 (FYFPKHQLVHILLGLAAGWGA) traverse the membrane as a helical segment. Over 79–92 (ARVRLDTLERHSRS) the chain is Cytoplasmic. Residues 93 to 113 (LFWAGIALLVLVLIPGVGKSV) traverse the membrane as a helical segment. The Periplasmic segment spans residues 114–121 (NGSVRWIN). Residues 122 to 142 (LFGLRVQVSEVFKLVAAIYVA) form a helical membrane-spanning segment. Residues 143–153 (GYISRHLDTVR) lie on the Cytoplasmic side of the membrane. Residues 154–174 (TSVKGMIFPLSLLAIGAVLLL) traverse the membrane as a helical segment. Residues 175 to 177 (KEP) lie on the Periplasmic side of the membrane. The helical transmembrane segment at 178–198 (DFGATAVVMATALGMLFLAGA) threads the bilayer. R199 is a topological domain (cytoplasmic). A helical transmembrane segment spans residues 200-220 (LWVFVGLLGLVAVAGTVLIYT). Residues 221 to 289 (AEYRLRRVLS…LFSVIGEELG (69 aa)) are Periplasmic-facing. The helical transmembrane segment at 290–310 (LWGATTVILLFAIVVWRALAI) threads the bilayer. Residues 311–318 (GRLAERSG) lie on the Cytoplasmic side of the membrane. A helical transmembrane segment spans residues 319–339 (NLFAAFLAYGIGIWLGLQSFI). The Periplasmic segment spans residues 340–355 (NMGVNMGMLPTKGLTL). Residues 356–376 (PLMSYGGGSMMVVCAAIGLLF) traverse the membrane as a helical segment. Residues 377–398 (RIRSEAVASFLGNGRKGLWPGV) are Cytoplasmic-facing.

This sequence belongs to the SEDS family. FtsW subfamily.

The protein localises to the cell inner membrane. The enzyme catalyses [GlcNAc-(1-&gt;4)-Mur2Ac(oyl-L-Ala-gamma-D-Glu-L-Lys-D-Ala-D-Ala)](n)-di-trans,octa-cis-undecaprenyl diphosphate + beta-D-GlcNAc-(1-&gt;4)-Mur2Ac(oyl-L-Ala-gamma-D-Glu-L-Lys-D-Ala-D-Ala)-di-trans,octa-cis-undecaprenyl diphosphate = [GlcNAc-(1-&gt;4)-Mur2Ac(oyl-L-Ala-gamma-D-Glu-L-Lys-D-Ala-D-Ala)](n+1)-di-trans,octa-cis-undecaprenyl diphosphate + di-trans,octa-cis-undecaprenyl diphosphate + H(+). It functions in the pathway cell wall biogenesis; peptidoglycan biosynthesis. Its function is as follows. Peptidoglycan polymerase that is essential for cell division. The protein is Probable peptidoglycan glycosyltransferase FtsW of Methylococcus capsulatus (strain ATCC 33009 / NCIMB 11132 / Bath).